The chain runs to 161 residues: Transcription elongation factor GreA (161 aa).

Belongs to the GreA/GreB family.

Necessary for efficient RNA polymerase transcription elongation past template-encoded arresting sites. The arresting sites in DNA have the property of trapping a certain fraction of elongating RNA polymerases that pass through, resulting in locked ternary complexes. Cleavage of the nascent transcript by cleavage factors such as GreA or GreB allows the resumption of elongation from the new 3'terminus. GreA releases sequences of 2 to 3 nucleotides. This Desulfotalea psychrophila (strain LSv54 / DSM 12343) protein is Transcription elongation factor GreA.